Here is a 1055-residue protein sequence, read N- to C-terminus: Ubiquitin carboxyl-terminal hydrolase 25 (1055 aa).

In terms of domain architecture, UBA-like spans 14–57 (QKHQQTFLNQLREITGINDTQILQQALKDSNGNLELAVAFLTAK). The segment at 77 to 102 (NDRYISVGSQADTNVIDLTGDDKDDL) is SUMO interaction domain (SIM). Ser85 carries the phosphoserine modification. Residues 89 to 95 (TNVIDLT) carry the Required for SUMO paralog-specific binding motif. 2 consecutive UIM domains span residues 97–116 (DDKD…SNRA) and 123–140 (TDEE…IAEN). Lys99 is covalently cross-linked (Glycyl lysine isopeptide (Lys-Gly) (interchain with G-Cter in SUMO); alternate). Lys99 participates in a covalent cross-link: Glycyl lysine isopeptide (Lys-Gly) (interchain with G-Cter in ubiquitin); alternate. In terms of domain architecture, USP spans 169-657 (VGLKNVGNTC…SAYCLMYIND (489 aa)). Cys178 is an active-site residue. The segment at 464–507 (VCTSPVDDIDASSPPSGSIPSQTLPSTTEQQGALSSELPSTSPS) is disordered. Polar residues predominate over residues 476–496 (SPPSGSIPSQTLPSTTEQQGA). Positions 497–507 (LSSELPSTSPS) are enriched in low complexity. Residues 541-578 (TEEELSVLESCLHRWRTEIENDTRDLQESISRIHRTIE) are a coiled coil. Residues His599 and His607 contribute to the active site. Residues 684–717 (DLRDFVEEDNQRFEKELEEWDAQLAQKALQEKLL) are a coiled coil. The disordered stretch occupies residues 727–749 (TSVTTAQAAGDPEYLEQPSRSDF). Tyr740 carries the post-translational modification Phosphotyrosine.

This sequence belongs to the peptidase C19 family. As to quaternary structure, homotetramer, inhibited form. Homodimer, active form. Interacts with ACTA1 (via its C-terminus); the interaction occurs for all isoforms but is strongest for isoform USP25m in muscle differentiating cells. Interacts (isoform USP25m only) with MYBPC1; the interaction prevents proteasomal degradation of MYBPC1. Interacts (isoform USP25m only) with FLNC (via filament repeats 17-18, 20-21 and 24). Interacts with GAPDH. Interacts with SUMO3; the interaction sumoylates efficiently USP25. Interacts with SUMO2; the interaction sumoylates efficiently USP25. Interacts with SUMO1; the interaction only weakly sumoylates USP25. Interacts with SYK; phosphorylates USP25 and regulates USP25 intracellular levels. Acetylated. Post-translationally, sumoylation impairs binding to and hydrolysis of ubiquitin chains. Sumoylated preferentially with SUMO2 or SUMO3. Desumoylated by SENP1. Polyubiquitinated by SMURF1 by promoting the 'Lys-48'-linkage leading to proteasomal degradation. In terms of processing, preferentially monoubiquitinated but can also be polyubiquitinated. Autodeubiquitinated. Ubiquitination activates the enzymatic activity either by preventing sumoylation or by allowing novel interactions. Phosphorylation in the C-terminal by SYK regulates USP25 cellular levels. In terms of tissue distribution, isoform USP25a is found in most adult and fetal tissues; expression is moderately high in testis, pancreas, kidney, skeletal muscle, liver, lung, placenta, heart, but very low in peripheral blood, colon, small intestine, ovary, prostate, thymus and spleen. Expressed in the brain, with high levels in the cerebral cortex. Isoform USP25b is found in all tissues except heart and skeletal muscle. Isoform USP25m is heart and skeletal muscle specific.

The protein resides in the cytoplasm. It localises to the nucleus. It carries out the reaction Thiol-dependent hydrolysis of ester, thioester, amide, peptide and isopeptide bonds formed by the C-terminal Gly of ubiquitin (a 76-residue protein attached to proteins as an intracellular targeting signal).. Its function is as follows. Deubiquitinating enzyme that hydrolyzes ubiquitin moieties conjugated to substrates and thus, functions in various biological processes including inflammation and immune response. Modulates the Wnt/beta-catenin pathway by deubiquitinating and stabilizing tankyrases TNKS1 and TNKS2. Regulates KEAP1-NRF2 axis in the defense against oxidative assaults by deubiquitinating KEAP1 and protecting it from degradation leading to degradation of the NRF2 transcription factor that is responsible for mounting an anti-oxidation gene expression program. Positively regulates RNA virus-induced innate signaling by interacting with and deubiquitinating ERLIN1 and ERLIN2. In turn, restricts virus production by regulating cholesterol biosynthetic flux. Acts as a negative regulator of interleukin-17-mediated signaling and inflammation through the removal of 'Lys-63'-linked ubiquitination of TRAF5 and TRAF6. Prevents the ubiquitination and degradation of TRAF3 to reduce the phosphorylation levels of JNK and P38, the secretion of IL-1B and to induce endotoxin tolerance. In terms of biological role, the muscle-specific isoform (USP25m) may have a role in the regulation of muscular differentiation and function. The sequence is that of Ubiquitin carboxyl-terminal hydrolase 25 (USP25) from Homo sapiens (Human).